Consider the following 165-residue polypeptide: MTLSKNSHKEDQLEEKVLVVNRCSKVVKGGRKFSFSALILVGDGKGRLGCGFAKANELTDAIRKGGEAARKNLITIETLDGDSIPHEVLVDQDGAQLLLKPAKPGTGIVAGSRIRLILEMAGIKNIVAKSLGSNNPMNQVKAAFKALLSLSSRKDVLQRRRVTHD.

The 64-residue stretch at 13–76 (LEEKVLVVNR…EAARKNLITI (64 aa)) folds into the S5 DRBM domain.

It belongs to the universal ribosomal protein uS5 family. As to quaternary structure, part of the 30S ribosomal subunit. Contacts proteins S4 and S8.

In terms of biological role, with S4 and S12 plays an important role in translational accuracy. Functionally, located at the back of the 30S subunit body where it stabilizes the conformation of the head with respect to the body. In Chlamydia felis (strain Fe/C-56) (Chlamydophila felis), this protein is Small ribosomal subunit protein uS5.